A 465-amino-acid polypeptide reads, in one-letter code: uncharacterized protein (465 aa).

Residues 56–76 (ILYMIIFAIFGLLPFLIALIF) form a helical membrane-spanning segment. A disordered region spans residues 177–198 (KFNKSKKSNKINDKTPILNNNN). The chain crosses the membrane as a helical span at residues 273–293 (LIFLLVSTILLIALIGFILII). The tract at residues 411-449 (NNYNNSNNNNNSNNSNSNNNNNNNNNNNNYNNNNYNNNN) is disordered.

It is found in the membrane. This is an uncharacterized protein from Dictyostelium discoideum (Social amoeba).